The chain runs to 227 residues: Transmembrane emp24 domain-containing protein 1 (227 aa).

The first 23 residues, methionine 1–glycine 23, serve as a signal peptide directing secretion. Residues alanine 24–asparagine 194 lie on the Extracellular side of the membrane. Residues lysine 43–phenylalanine 125 enclose the GOLD domain. Residues glutamate 145–glutamine 170 are a coiled coil. A helical transmembrane segment spans residues phenylalanine 195 to leucine 215. The Cytoplasmic segment spans residues lysine 216–threonine 227. The COPII vesicle coat-binding motif lies at phenylalanine 218 to phenylalanine 219. The short motif at phenylalanine 218 to threonine 227 is the COPI vesicle coat-binding element.

Belongs to the EMP24/GP25L family. In terms of assembly, homodimer in endoplasmic reticulum, endoplasmic reticulum-Golgi intermediate compartment and cis-Golgi network. Interacts with IL1RL1. Interacts with RNF26; this interaction is important to modulate innate immune signaling through the cGAS-STING pathway. As to expression, widely expressed.

Its subcellular location is the cell membrane. The protein localises to the endoplasmic reticulum membrane. The protein resides in the golgi apparatus. It localises to the cis-Golgi network membrane. It is found in the endoplasmic reticulum-Golgi intermediate compartment membrane. Potential role in vesicular protein trafficking, mainly in the early secretory pathway. May act as a cargo receptor at the lumenal side for incorporation of secretory cargo molecules into transport vesicles and may be involved in vesicle coat formation at the cytoplasmic side. Plays a positive role in IL-33-mediated IL-8 and IL-6 production by interacting with interleukin-33 receptor IL1RL1. Also plays a role in the modulation of innate immune signaling through the cGAS-STING pathway by interacting with RNF26. The sequence is that of Transmembrane emp24 domain-containing protein 1 (TMED1) from Homo sapiens (Human).